Consider the following 265-residue polypeptide: Orotidine 5'-phosphate decarboxylase (265 aa).

Substrate is bound by residues Asp38, 60–62 (KTH), 91–100 (DRKFADIGNT), Tyr213, and Arg232. Lys93 acts as the Proton donor in catalysis.

This sequence belongs to the OMP decarboxylase family.

The enzyme catalyses orotidine 5'-phosphate + H(+) = UMP + CO2. Its pathway is pyrimidine metabolism; UMP biosynthesis via de novo pathway; UMP from orotate: step 2/2. The protein is Orotidine 5'-phosphate decarboxylase (pyrG) of Rhizopus oryzae (Mucormycosis agent).